A 525-amino-acid polypeptide reads, in one-letter code: Polyamine aminopropyltransferase 1 (525 aa).

6 helical membrane-spanning segments follow: residues 21-41 (ALLV…ELIA), 53-73 (ILQF…GSWV), 89-109 (LELL…LLFA), 117-137 (LVLY…IPLV), 155-175 (VLTF…LVLA), and 180-200 (LVRT…WTLW). In terms of domain architecture, PABS spans 220 to 464 (AGMVGAALLA…GEWGFILAAP (245 aa)). Residues 222-471 (MVGAALLAGF…AAPGRADFRP (250 aa)) are spermidine synthase. Gln259 contributes to the S-methyl-5'-thioadenosine binding site. Positions 289 and 313 each coordinate spermidine. Residues Asp333 and 367–368 (DA) each bind S-methyl-5'-thioadenosine. Catalysis depends on Asp385, which acts as the Proton acceptor.

It belongs to the spermidine/spermine synthase family. Homodimer or homotetramer.

The protein resides in the cell membrane. The enzyme catalyses S-adenosyl 3-(methylsulfanyl)propylamine + putrescine = S-methyl-5'-thioadenosine + spermidine + H(+). The protein operates within amine and polyamine biosynthesis; spermidine biosynthesis; spermidine from putrescine: step 1/1. Functionally, catalyzes the irreversible transfer of a propylamine group from the amino donor S-adenosylmethioninamine (decarboxy-AdoMet) to putrescine (1,4-diaminobutane) to yield spermidine. The chain is Polyamine aminopropyltransferase 1 from Ralstonia nicotianae (strain ATCC BAA-1114 / GMI1000) (Ralstonia solanacearum).